We begin with the raw amino-acid sequence, 335 residues long: Biotin synthase (335 aa).

In terms of domain architecture, Radical SAM core spans 51-281 (YRVQLASLLS…RSRVRLSAGR (231 aa)). Positions 66, 70, and 73 each coordinate [4Fe-4S] cluster. Positions 112, 144, 204, and 276 each coordinate [2Fe-2S] cluster.

It belongs to the radical SAM superfamily. Biotin synthase family. In terms of assembly, homodimer. Requires [4Fe-4S] cluster as cofactor. The cofactor is [2Fe-2S] cluster.

The enzyme catalyses (4R,5S)-dethiobiotin + (sulfur carrier)-SH + 2 reduced [2Fe-2S]-[ferredoxin] + 2 S-adenosyl-L-methionine = (sulfur carrier)-H + biotin + 2 5'-deoxyadenosine + 2 L-methionine + 2 oxidized [2Fe-2S]-[ferredoxin]. Its pathway is cofactor biosynthesis; biotin biosynthesis; biotin from 7,8-diaminononanoate: step 2/2. In terms of biological role, catalyzes the conversion of dethiobiotin (DTB) to biotin by the insertion of a sulfur atom into dethiobiotin via a radical-based mechanism. The chain is Biotin synthase from Prochlorococcus marinus (strain MIT 9303).